Here is a 192-residue protein sequence, read N- to C-terminus: Ras-like GTP-binding protein rhoA (192 aa).

A GTP-binding site is contributed by 12 to 19 (GDGACGKT). The short motif at 34–42 (YVPTVFENY) is the Effector region element. Residues 59-63 (DTAGQ) and 117-120 (NKRD) contribute to the GTP site. Position 189 is a cysteine methyl ester (C189). Residue C189 is the site of S-geranylgeranyl cysteine attachment. The propeptide at 190-192 (MIL) is removed in mature form.

This sequence belongs to the small GTPase superfamily. Rho family. May interact with unc-89 (via DN and PH domains). Interacts with bli-3 and memo-1. In larvae and adults, enriched at the tip of the head where the anterior sensory organ is located and in the pharyngeal nerve ring (at protein level). In embryos, enriched at the boundaries of dorsal cells undergoing intercalation, ventral enclosure and elongation.

The protein localises to the cell membrane. The protein resides in the cytoplasm. It is found in the cytoskeleton. Its subcellular location is the cell cortex. GTP hydrolysis is stimulated by unc-89. Functionally, required for ventral migration of epidermal cells during ventral enclosure in the embryo and for cell elongation. Also required for ventral migration of P cells during larval development. Involved in asymmetric spindle positioning during anaphase and establishment of cell polarity during embryo development. In adults, involved in regulation of multiple processes including locomotion, pharyngeal pumping, fecundity, ovulation, defecation and body morphology. In body wall muscles, regulates organization of myosin thick filaments downstream of unc-89. Association with the oxidase bli-3 promotes ROS production and this interaction may be modulated by memo-1, in order to control the oxidative stress response and longevity. The chain is Ras-like GTP-binding protein rhoA from Caenorhabditis elegans.